Consider the following 366-residue polypeptide: Putative [LysW]-aminoadipate semialdehyde/glutamate semialdehyde transaminase (366 aa).

Pyridoxal 5'-phosphate contacts are provided by residues 90–91 and phenylalanine 117; that span reads GT. Substrate is bound at residue arginine 120. Position 202–205 (202–205) interacts with pyridoxal 5'-phosphate; sequence DEVQ. N6-(pyridoxal phosphate)lysine is present on lysine 230. Serine 254 is a binding site for substrate. Threonine 255 is a pyridoxal 5'-phosphate binding site.

The protein belongs to the class-III pyridoxal-phosphate-dependent aminotransferase family. LysJ subfamily. As to quaternary structure, homodimer. Requires pyridoxal 5'-phosphate as cofactor.

It localises to the cytoplasm. It carries out the reaction [amino-group carrier protein]-C-terminal-gamma-(L-lysyl)-L-glutamate + 2-oxoglutarate = [amino-group carrier protein]-C-terminal-N-(1-carboxy-5-oxopentan-1-yl)-L-glutamine + L-glutamate. The enzyme catalyses [amino-group carrier protein]-C-terminal-gamma-(L-ornithyl)-L-glutamate + 2-oxoglutarate = [amino-group carrier protein]-C-terminal-gamma-(L-glutamyl-5-semialdehyde)-L-glutamate + L-glutamate. The protein operates within amino-acid biosynthesis; L-lysine biosynthesis via AAA pathway; L-lysine from L-alpha-aminoadipate (Thermus route): step 4/5. It functions in the pathway amino-acid biosynthesis; L-arginine biosynthesis. Its function is as follows. Involved in both the arginine and lysine biosynthetic pathways. This is Putative [LysW]-aminoadipate semialdehyde/glutamate semialdehyde transaminase from Pyrococcus furiosus (strain ATCC 43587 / DSM 3638 / JCM 8422 / Vc1).